The sequence spans 288 residues: Short chain aldehyde dehydrogenase 1 (288 aa).

Residues 26–28 (SGI), D47, 72–73 (DV), and 99–101 (NAG) contribute to the NAD(+) site. S153 serves as the catalytic Proton donor. The substrate site is built by S153 and Y166. Residues Y166, K170, and T201 each contribute to the NAD(+) site. Catalysis depends on Y166, which acts as the Proton acceptor. The Proton donor/acceptor role is filled by K170.

Belongs to the short-chain dehydrogenases/reductases (SDR) family. Homodimer. Expressed in mature seeds.

It catalyses the reaction 4,5,8-trihydroxycasbene + 2 NAD(+) = jolkinol C + 2 NADH + 2 H(+). It carries out the reaction a secondary alcohol + NAD(+) = a ketone + NADH + H(+). The catalysed reaction is a primary alcohol + NAD(+) = an aldehyde + NADH + H(+). It functions in the pathway secondary metabolite biosynthesis; terpenoid biosynthesis. In terms of biological role, involved in the biosynthesis of macrocyclic lathyrane type diterpenoids (also called Euphorbia factors) natural products, including the cyclization route from casbene to jolkinol C, a precursor for ingenol mebutate that is used to treat actinic keratosis, a precancerous skin condition. Catalyzes the conversion of 4,5,8-trihydroxycasbene into jolkinol C in presence of NAD. Also mediates the formation of casbene dione derivative and 4-ketocasbene from 4-hydroxy-8-ketocasbene and 4-hydroxycasbene, respectively. Together with CYP71D445, triggers the biosynthesis of 8-ketocasbene from 8-hydroxycasbene. In Euphorbia lathyris (Caper spurge), this protein is Short chain aldehyde dehydrogenase 1.